Here is an 815-residue protein sequence, read N- to C-terminus: Cilia- and flagella-associated protein 251 (815 aa).

WD repeat units lie at residues 58-99, 103-148, 166-205, 218-257, 271-308, 379-418, 420-460, 463-502, 511-553, and 573-612; these read GHTS…PTRT, PHRH…TPPE, PAGD…PRFQ, QSVG…AQVG, IHNC…VAWF, SLLA…LLGG, AFER…DLYV, NTAA…HTMR, SHHG…VAAG, and SFAP…LERS.

Identified in a spoke-associated complex containing CFAP61, CFAP91 and CFAP251; the complex is associated with the radial spokes in the axoneme. The complex associates with Calmodulin; the association is calcium sensitive.

Its subcellular location is the cytoplasm. The protein resides in the cytoskeleton. The protein localises to the flagellum axoneme. Functionally, as component of a spoke-associated complex, regulates flagellar dynein activity by mediating regulatory signals between the radial spokes and dynein arms. This Chlamydomonas reinhardtii (Chlamydomonas smithii) protein is Cilia- and flagella-associated protein 251.